The chain runs to 409 residues: L-cysteine:1D-myo-inositol 2-amino-2-deoxy-alpha-D-glucopyranoside ligase (409 aa).

Position 25 (C25) interacts with Zn(2+). Residues C25 to T28, T40, and N63 to T65 each bind L-cysteinyl-5'-AMP. A 'HIGH' region motif is present at residues I27–H37. A 'ERGGDP' region motif is present at residues E179–P184. L-cysteinyl-5'-AMP is bound at residue W219. Position 223 (C223) interacts with Zn(2+). G241–D243 is an L-cysteinyl-5'-AMP binding site. H248 provides a ligand contact to Zn(2+). V274 provides a ligand contact to L-cysteinyl-5'-AMP. The 'KMSKS' region signature appears at K280–S284.

Belongs to the class-I aminoacyl-tRNA synthetase family. MshC subfamily. As to quaternary structure, monomer. It depends on Zn(2+) as a cofactor.

It carries out the reaction 1D-myo-inositol 2-amino-2-deoxy-alpha-D-glucopyranoside + L-cysteine + ATP = 1D-myo-inositol 2-(L-cysteinylamino)-2-deoxy-alpha-D-glucopyranoside + AMP + diphosphate + H(+). In terms of biological role, catalyzes the ATP-dependent condensation of GlcN-Ins and L-cysteine to form L-Cys-GlcN-Ins. The polypeptide is L-cysteine:1D-myo-inositol 2-amino-2-deoxy-alpha-D-glucopyranoside ligase (Clavibacter sepedonicus (Clavibacter michiganensis subsp. sepedonicus)).